A 609-amino-acid chain; its full sequence is MWRLPGARAALRVIRTAVEKLSRAEAGSQTAAGAMERAVVRCVPSEPKLSLSFALADGSHKNMQRDQSEPLGRVLSRIATNALKGHAKAAAAKKSRKSRPNASGGAACSGPGPEPAVFCEPVVKLYYREEAVAEDVLNVDAWQDGAVLQIGDVKYKVERNPPAFTELQLPRYIMAGFPVCPKLSLEFGDPASSLFRWYKEAKPGAAEPEVGVPSSLSPSSPSSSWTETDVEERVYTPSNADIGLRLKLHCTPGDGQRFGHSRELESVCVVEAGPGTCTFDHRHLYTKKVTEDALIRTVSYNILADTYAQTEFSRTVLYPYCAPYALELDYRQNLIQKELTGYNADVICLQEVDRAVFSDSLVPALEAFGLEGVFRIKQHEGLATFYRKSKFSLLSQHDISFYEALESDPLHKELLEKLVLYPSAQEKVLQRSSVLQVSVLQSTKDSSKRICVANTHLYWHPKGGYIRLIQMAVALAHIRHVSCDLYPGIPVIFCGDFNSTPSTGMYHFVINGSIPEDHEDWASNGEEERCNMSLTHFFKLKSACGEPAYTNYVGGFHGCLDYIFIDLNALEVEQVIPLPSHEEVTTHQALPSVSHPSDHIALVCDLKWK.

A mitochondrion-targeting transit peptide spans 1 to 42 (MWRLPGARAALRVIRTAVEKLSRAEAGSQTAAGAMERAVVRC). Residues 89–99 (AAAAKKSRKSR) are compositionally biased toward basic residues. Disordered stretches follow at residues 89–111 (AAAAKKSRKSRPNASGGAACSGP) and 206–230 (AEPEVGVPSSLSPSSPSSSWTETDV). Low complexity-rich tracts occupy residues 100–111 (PNASGGAACSGP) and 213–224 (PSSLSPSSPSSS). Position 217 is a phosphoserine (S217). Mg(2+)-binding residues include E351, D496, and N498. The active-site Proton donor/acceptor is the D496.

Belongs to the CCR4/nocturin family. Mg(2+) is required as a cofactor. In terms of tissue distribution, ubiquitous.

The protein localises to the mitochondrion matrix. It catalyses the reaction Exonucleolytic cleavage of poly(A) to 5'-AMP.. Functionally, enzyme that cleaves 2',5'-phosphodiester bond linking adenosines of the 5'-triphosphorylated oligoadenylates, triphosphorylated oligoadenylates referred as 2-5A modulates the 2-5A system. Degrades triphosphorylated 2-5A to produce AMP and ATP. Also cleaves 3',5'-phosphodiester bond of oligoadenylates. Plays a role as a negative regulator of the 2-5A system that is one of the major pathways for antiviral and antitumor functions induced by interferons (IFNs). Suppression of this enzyme increases cellular 2-5A levels and decreases viral replication in cultured small-airway epithelial cells and Hela cells. This is 2',5'-phosphodiesterase 12 (PDE12) from Homo sapiens (Human).